The primary structure comprises 121 residues: Protein yippee-like At3g55890 (121 aa).

The Yippee domain occupies 12 to 109 (NIYICKLCKT…LELYKISGPH (98 aa)). Positions 16, 19, 72, and 75 each coordinate Zn(2+).

This sequence belongs to the yippee family.

This chain is Protein yippee-like At3g55890, found in Arabidopsis thaliana (Mouse-ear cress).